The sequence spans 291 residues: Urease accessory protein UreD (291 aa).

Belongs to the UreD family. In terms of assembly, ureD, UreF and UreG form a complex that acts as a GTP-hydrolysis-dependent molecular chaperone, activating the urease apoprotein by helping to assemble the nickel containing metallocenter of UreC. The UreE protein probably delivers the nickel.

The protein resides in the cytoplasm. Its function is as follows. Required for maturation of urease via the functional incorporation of the urease nickel metallocenter. The protein is Urease accessory protein UreD of Acinetobacter baumannii (strain SDF).